Consider the following 106-residue polypeptide: UPF0145 protein CTC_01500 (106 aa).

This sequence belongs to the UPF0145 family.

The chain is UPF0145 protein CTC_01500 from Clostridium tetani (strain Massachusetts / E88).